The sequence spans 228 residues: Lipoprotein-releasing system ATP-binding protein LolD (228 aa).

The ABC transporter domain occupies 6-228 (IKCINLNKSY…ENNQIFNYES (223 aa)). 42–49 (GKSGSGKT) contacts ATP.

Belongs to the ABC transporter superfamily. Lipoprotein translocase (TC 3.A.1.125) family.

It localises to the cell inner membrane. Functionally, usually LolD forms an ABC transporter complex with LolC and LolE involved in the translocation of lipoprotein, in an ATP-dependent manner. However, LolE is certainly not functional as it is frameshifted. This chain is Lipoprotein-releasing system ATP-binding protein LolD, found in Buchnera aphidicola subsp. Acyrthosiphon pisum (strain APS) (Acyrthosiphon pisum symbiotic bacterium).